The chain runs to 369 residues: Anhydro-N-acetylmuramic acid kinase (369 aa).

12 to 19 (GTSLDGVD) contributes to the ATP binding site.

It belongs to the anhydro-N-acetylmuramic acid kinase family.

It catalyses the reaction 1,6-anhydro-N-acetyl-beta-muramate + ATP + H2O = N-acetyl-D-muramate 6-phosphate + ADP + H(+). It functions in the pathway amino-sugar metabolism; 1,6-anhydro-N-acetylmuramate degradation. The protein operates within cell wall biogenesis; peptidoglycan recycling. In terms of biological role, catalyzes the specific phosphorylation of 1,6-anhydro-N-acetylmuramic acid (anhMurNAc) with the simultaneous cleavage of the 1,6-anhydro ring, generating MurNAc-6-P. Is required for the utilization of anhMurNAc either imported from the medium or derived from its own cell wall murein, and thus plays a role in cell wall recycling. The protein is Anhydro-N-acetylmuramic acid kinase of Escherichia coli O45:K1 (strain S88 / ExPEC).